The primary structure comprises 102 residues: Putative peripheral benzodiazepine receptor-related protein (102 aa).

As to expression, ubiquitous.

This is Putative peripheral benzodiazepine receptor-related protein (TSPO) from Homo sapiens (Human).